A 160-amino-acid chain; its full sequence is Lymphocyte antigen 96 (160 aa).

A signal peptide spans M1 to A18. Cystine bridges form between C25-C51, C37-C148, and C95-C105. N-linked (GlcNAc...) asparagine glycosylation is present at N26. N-linked (GlcNAc...) asparagine glycosylation is present at N114. Residues F119–G123 are interaction with lipopolysaccharide.

In terms of assembly, heterogeneous homomer formed from homodimers; disulfide-linked. Belongs to the lipopolysaccharide (LPS) receptor, a multi-protein complex containing at least CD14, LY96 and TLR4. Binds to the extracellular domains of TLR2 and TLR4. Ligand binding induces interaction with TLR4 and oligomerization of the complex. N-glycosylated; high-mannose.

It is found in the secreted. Its subcellular location is the extracellular space. Binds bacterial lipopolysaccharide (LPS). Cooperates with TLR4 in the innate immune response to bacterial lipopolysaccharide (LPS), and with TLR2 in the response to cell wall components from Gram-positive and Gram-negative bacteria. Enhances TLR4-dependent activation of NF-kappa-B. Cells expressing both LY96 and TLR4, but not TLR4 alone, respond to LPS. The protein is Lymphocyte antigen 96 (LY96) of Homo sapiens (Human).